Here is a 148-residue protein sequence, read N- to C-terminus: Calmodulin-4 (148 aa).

4 EF-hand domains span residues 8-43, 44-79, 80-115, and 116-148; these read EEVAEFQAAFNRFDKNKDGHISVEELGDVMKQLGKN, LPEKDLKALISKLDTDGDGKISFEEFLTAIEKYKKG, HRAGELRAVFNVLDQNGDGYITVDELKESLSKLGES, and LSQEELEDMIRVADVDQDGKVKYEEFVRLHVEN. Ca(2+)-binding residues include Asp-21, Asn-23, Asp-25, His-27, Glu-32, Asp-57, Asp-59, Asp-61, Lys-63, Glu-68, Asp-93, Asn-95, Asp-97, Tyr-99, and Glu-104.

Implicated in the early stage of ectopic ossification. The sequence is that of Calmodulin-4 (Calm4) from Mus musculus (Mouse).